Reading from the N-terminus, the 92-residue chain is Islet amyloid polypeptide (92 aa).

An N-terminal signal peptide occupies residues 1–22; it reads MHISKLPAALLIFSVALNHLKA. The propeptide occupies 23–34; that stretch reads TPVRSGTNHQMD. Cys38 and Cys43 are oxidised to a cystine. Tyr73 carries the tyrosine amide modification. A propeptide spanning residues 77-92 is cleaved from the precursor; sequence SAAEIPDGDSLDLFLL.

This sequence belongs to the calcitonin family. Can form homodimers. Interacts with IDE and INS. Interaction with INS inhibits homodimerization and fibril formation.

The protein localises to the secreted. In terms of biological role, amylin/IAPP is a glucoregulatory peptide hormone that plays an important role in the regulation of energy homeostasis. Selectively inhibits insulin-stimulated glucose utilization and glycogen deposition in muscle, while not affecting adipocyte glucose metabolism. IAPP function is mediated by the CALCR-RAMPs (AMYRs) receptor complexes. Amylin can also bind CALCR receptor in the absence of RAMPs, although it is more selective for AMYRs. The polypeptide is Islet amyloid polypeptide (IAPP) (Mesocricetus auratus (Golden hamster)).